A 120-amino-acid polypeptide reads, in one-letter code: Ig heavy chain V region 36-65 (120 aa).

One can recognise an Ig-like domain in the interval 1–111 (VQLQQSGAEL…GGSYYFDYWG (111 aa)).

The polypeptide is Ig heavy chain V region 36-65 (Mus musculus (Mouse)).